Consider the following 444-residue polypeptide: MSQTHINVIGAGLAGSEAAYQIAKRGIPVKLYEMRGVKPTPQHKTDKFAELVCSNSFRGDSLTNAVGLLKEEMRRLDSIIMRAGEAHRVPAGGAMAMDRENFSQAVTDEIHNHPLIEVIRGEITEIPEDAITVIATGPLTSDALAEKIHALNGGDGFYFYDAAAPIVDSSTINMDLVYLKSRYDKGEAAYLNAPMNKEQFNAFYEALISAEEAPLNSFEKEKYFEGCMPIEVMAKRGIKTMLYGPMKPVGLEYPEDYKGPRDGEYKTPYAVVQLRQDNAAGSLYNIVGFQTHLKWGEQKRIFQMIPGLENAEFVRYGVMHRNSYMDSPNLLEQTFATKKNPNLFFAGQMTGVEGYVESAASGLVAGINAVRRFHGEEPVIFPQTTAIGALPFYITHTESKHFQPMNVNFGIIKELDGPRIRDKKERYEAIAERSLKDLEEFLTV.

Residue Gly10–Gly15 participates in FAD binding.

Belongs to the MnmG family. TrmFO subfamily. The cofactor is FAD.

It localises to the cytoplasm. The enzyme catalyses uridine(54) in tRNA + (6R)-5,10-methylene-5,6,7,8-tetrahydrofolate + NADH + H(+) = 5-methyluridine(54) in tRNA + (6S)-5,6,7,8-tetrahydrofolate + NAD(+). It catalyses the reaction uridine(54) in tRNA + (6R)-5,10-methylene-5,6,7,8-tetrahydrofolate + NADPH + H(+) = 5-methyluridine(54) in tRNA + (6S)-5,6,7,8-tetrahydrofolate + NADP(+). In terms of biological role, catalyzes the folate-dependent formation of 5-methyl-uridine at position 54 (M-5-U54) in all tRNAs. This chain is Methylenetetrahydrofolate--tRNA-(uracil-5-)-methyltransferase TrmFO, found in Streptococcus suis (strain 98HAH33).